The primary structure comprises 314 residues: Methionyl-tRNA formyltransferase (314 aa).

110–113 (SLLP) contributes to the (6S)-5,6,7,8-tetrahydrofolate binding site.

Belongs to the Fmt family.

It catalyses the reaction L-methionyl-tRNA(fMet) + (6R)-10-formyltetrahydrofolate = N-formyl-L-methionyl-tRNA(fMet) + (6S)-5,6,7,8-tetrahydrofolate + H(+). Attaches a formyl group to the free amino group of methionyl-tRNA(fMet). The formyl group appears to play a dual role in the initiator identity of N-formylmethionyl-tRNA by promoting its recognition by IF2 and preventing the misappropriation of this tRNA by the elongation apparatus. The sequence is that of Methionyl-tRNA formyltransferase from Bacillus anthracis (strain A0248).